A 593-amino-acid chain; its full sequence is Aspartate--tRNA(Asp/Asn) ligase (593 aa).

An L-aspartate-binding site is contributed by Glu-175. Residues 199 to 202 are aspartate; sequence QQYK. Arg-221 and His-452 together coordinate L-aspartate. 221–223 is a binding site for ATP; sequence RDE. Glu-486 is an ATP binding site. Arg-493 lines the L-aspartate pocket. 538 to 541 provides a ligand contact to ATP; the sequence is GVDR.

Belongs to the class-II aminoacyl-tRNA synthetase family. Type 1 subfamily. Homodimer.

The protein localises to the cytoplasm. It carries out the reaction tRNA(Asx) + L-aspartate + ATP = L-aspartyl-tRNA(Asx) + AMP + diphosphate. Functionally, aspartyl-tRNA synthetase with relaxed tRNA specificity since it is able to aspartylate not only its cognate tRNA(Asp) but also tRNA(Asn). Reaction proceeds in two steps: L-aspartate is first activated by ATP to form Asp-AMP and then transferred to the acceptor end of tRNA(Asp/Asn). This chain is Aspartate--tRNA(Asp/Asn) ligase, found in Novosphingobium aromaticivorans (strain ATCC 700278 / DSM 12444 / CCUG 56034 / CIP 105152 / NBRC 16084 / F199).